The chain runs to 433 residues: Probable M18 family aminopeptidase 2 (433 aa).

3 residues coordinate Zn(2+): histidine 79, histidine 153, and histidine 404.

The protein belongs to the peptidase M18 family. It depends on Zn(2+) as a cofactor.

The chain is Probable M18 family aminopeptidase 2 from Mycobacterium tuberculosis (strain ATCC 25177 / H37Ra).